Consider the following 108-residue polypeptide: Nucleoid-associated protein BamMC406_1737 (108 aa).

Positions 85-95 are enriched in polar residues; that stretch reads ATSQEKMSGMT. The disordered stretch occupies residues 85 to 108; the sequence is ATSQEKMSGMTSGLPLPPGFKLPF. Residues 99–108 are compositionally biased toward pro residues; the sequence is PLPPGFKLPF.

The protein belongs to the YbaB/EbfC family. In terms of assembly, homodimer.

The protein resides in the cytoplasm. It localises to the nucleoid. In terms of biological role, binds to DNA and alters its conformation. May be involved in regulation of gene expression, nucleoid organization and DNA protection. The protein is Nucleoid-associated protein BamMC406_1737 of Burkholderia ambifaria (strain MC40-6).